The primary structure comprises 143 residues: Transcriptional regulator MraZ (143 aa).

SpoVT-AbrB domains lie at 5-47 (TYTP…PREE) and 76-119 (ADEQ…DAAA).

It belongs to the MraZ family. As to quaternary structure, forms oligomers.

Its subcellular location is the cytoplasm. It localises to the nucleoid. The protein is Transcriptional regulator MraZ of Corynebacterium diphtheriae (strain ATCC 700971 / NCTC 13129 / Biotype gravis).